A 259-amino-acid chain; its full sequence is 5'-nucleotidase SurE (259 aa).

Residues D8, D9, S40, and N92 each coordinate a divalent metal cation.

Belongs to the SurE nucleotidase family. A divalent metal cation is required as a cofactor.

The protein localises to the cytoplasm. It catalyses the reaction a ribonucleoside 5'-phosphate + H2O = a ribonucleoside + phosphate. Functionally, nucleotidase that shows phosphatase activity on nucleoside 5'-monophosphates. This chain is 5'-nucleotidase SurE, found in Stenotrophomonas maltophilia (strain K279a).